We begin with the raw amino-acid sequence, 276 residues long: Diaminopimelate epimerase (276 aa).

Positions 13, 46, and 66 each coordinate substrate. Cysteine 75 (proton donor) is an active-site residue. Residues 76–77, asparagine 159, asparagine 192, and 210–211 each bind substrate; these read GN and ER. Cysteine 219 (proton acceptor) is an active-site residue. 220 to 221 contacts substrate; it reads GT.

This sequence belongs to the diaminopimelate epimerase family. In terms of assembly, homodimer.

It is found in the cytoplasm. It carries out the reaction (2S,6S)-2,6-diaminopimelate = meso-2,6-diaminopimelate. Its pathway is amino-acid biosynthesis; L-lysine biosynthesis via DAP pathway; DL-2,6-diaminopimelate from LL-2,6-diaminopimelate: step 1/1. Functionally, catalyzes the stereoinversion of LL-2,6-diaminopimelate (L,L-DAP) to meso-diaminopimelate (meso-DAP), a precursor of L-lysine and an essential component of the bacterial peptidoglycan. This is Diaminopimelate epimerase from Pseudomonas syringae pv. tomato (strain ATCC BAA-871 / DC3000).